The primary structure comprises 153 residues: MSIELDLQIACENENGLPSEKDLMTWLNAVIPQFQPQAELTIRIVDEKESHELNHEYRGKDKPTNVLSFPFEAPPGLELDLLGDLIICRQVVEEEAIEQNKPLLAHWAHMVVHGSLHLLGYDHIEDDEAEEMESLETELMQGMGFEDPYIAEK.

Zn(2+) contacts are provided by histidine 113, histidine 117, and histidine 123.

Belongs to the endoribonuclease YbeY family. Requires Zn(2+) as cofactor.

It localises to the cytoplasm. In terms of biological role, single strand-specific metallo-endoribonuclease involved in late-stage 70S ribosome quality control and in maturation of the 3' terminus of the 16S rRNA. The protein is Endoribonuclease YbeY of Aliivibrio fischeri (strain MJ11) (Vibrio fischeri).